Consider the following 116-residue polypeptide: NADPH-dependent 7-cyano-7-deazaguanine reductase (116 aa).

The Thioimide intermediate role is filled by cysteine 31. The active-site Proton donor is aspartate 38. Substrate contacts are provided by residues 53–55 (VEL) and 72–73 (YE).

It belongs to the GTP cyclohydrolase I family. QueF type 1 subfamily.

It is found in the cytoplasm. It catalyses the reaction 7-aminomethyl-7-carbaguanine + 2 NADP(+) = 7-cyano-7-deazaguanine + 2 NADPH + 3 H(+). The protein operates within tRNA modification; tRNA-queuosine biosynthesis. In terms of biological role, catalyzes the NADPH-dependent reduction of 7-cyano-7-deazaguanine (preQ0) to 7-aminomethyl-7-deazaguanine (preQ1). The protein is NADPH-dependent 7-cyano-7-deazaguanine reductase of Chlorobium phaeovibrioides (strain DSM 265 / 1930) (Prosthecochloris vibrioformis (strain DSM 265)).